A 144-amino-acid polypeptide reads, in one-letter code: Small ribosomal subunit protein uS19 (144 aa).

This sequence belongs to the universal ribosomal protein uS19 family.

In terms of biological role, protein S19 forms a complex with S13 that binds strongly to the 16S ribosomal RNA. In Aeropyrum pernix (strain ATCC 700893 / DSM 11879 / JCM 9820 / NBRC 100138 / K1), this protein is Small ribosomal subunit protein uS19 (rps19).